Consider the following 424-residue polypeptide: Light-independent protochlorophyllide reductase subunit N (424 aa).

Positions 26, 51, and 112 each coordinate [4Fe-4S] cluster.

Belongs to the BchN/ChlN family. In terms of assembly, protochlorophyllide reductase is composed of three subunits; BchL, BchN and BchB. Forms a heterotetramer of two BchB and two BchN subunits. [4Fe-4S] cluster is required as a cofactor.

The enzyme catalyses chlorophyllide a + oxidized 2[4Fe-4S]-[ferredoxin] + 2 ADP + 2 phosphate = protochlorophyllide a + reduced 2[4Fe-4S]-[ferredoxin] + 2 ATP + 2 H2O. Its pathway is porphyrin-containing compound metabolism; bacteriochlorophyll biosynthesis (light-independent). In terms of biological role, component of the dark-operative protochlorophyllide reductase (DPOR) that uses Mg-ATP and reduced ferredoxin to reduce ring D of protochlorophyllide (Pchlide) to form chlorophyllide a (Chlide). This reaction is light-independent. The NB-protein (BchN-BchB) is the catalytic component of the complex. In Rhodobacter capsulatus (strain ATCC BAA-309 / NBRC 16581 / SB1003), this protein is Light-independent protochlorophyllide reductase subunit N.